The sequence spans 195 residues: Elongation factor P (195 aa).

Belongs to the elongation factor P family.

It localises to the cytoplasm. It functions in the pathway protein biosynthesis; polypeptide chain elongation. Involved in peptide bond synthesis. Stimulates efficient translation and peptide-bond synthesis on native or reconstituted 70S ribosomes in vitro. Probably functions indirectly by altering the affinity of the ribosome for aminoacyl-tRNA, thus increasing their reactivity as acceptors for peptidyl transferase. This is Elongation factor P from Rhodopirellula baltica (strain DSM 10527 / NCIMB 13988 / SH1).